A 124-amino-acid chain; its full sequence is Small ribosomal subunit protein uS12 (124 aa).

Residues 1–29 form a disordered region; sequence MPTINQLVRRPRRPRESANKAPALQHNPQ. 3-methylthioaspartic acid is present on Asp-90.

This sequence belongs to the universal ribosomal protein uS12 family. Part of the 30S ribosomal subunit. Contacts proteins S8 and S17. May interact with IF1 in the 30S initiation complex.

With S4 and S5 plays an important role in translational accuracy. Its function is as follows. Interacts with and stabilizes bases of the 16S rRNA that are involved in tRNA selection in the A site and with the mRNA backbone. Located at the interface of the 30S and 50S subunits, it traverses the body of the 30S subunit contacting proteins on the other side and probably holding the rRNA structure together. The combined cluster of proteins S8, S12 and S17 appears to hold together the shoulder and platform of the 30S subunit. The protein is Small ribosomal subunit protein uS12 of Anaplasma marginale (strain Florida).